The sequence spans 463 residues: Kynureninase 2 (463 aa).

Residues leucine 134, threonine 135, 162 to 165, aspartate 247, histidine 250, and tyrosine 272 each bind pyridoxal 5'-phosphate; that span reads FPSD. An N6-(pyridoxal phosphate)lysine modification is found at lysine 273. Residues tryptophan 312 and asparagine 340 each coordinate pyridoxal 5'-phosphate.

Belongs to the kynureninase family. In terms of assembly, homodimer. It depends on pyridoxal 5'-phosphate as a cofactor.

The protein localises to the cytoplasm. It catalyses the reaction L-kynurenine + H2O = anthranilate + L-alanine + H(+). The catalysed reaction is 3-hydroxy-L-kynurenine + H2O = 3-hydroxyanthranilate + L-alanine + H(+). It functions in the pathway amino-acid degradation; L-kynurenine degradation; L-alanine and anthranilate from L-kynurenine: step 1/1. The protein operates within cofactor biosynthesis; NAD(+) biosynthesis; quinolinate from L-kynurenine: step 2/3. Functionally, catalyzes the cleavage of L-kynurenine (L-Kyn) and L-3-hydroxykynurenine (L-3OHKyn) into anthranilic acid (AA) and 3-hydroxyanthranilic acid (3-OHAA), respectively. The protein is Kynureninase 2 (bna5-2) of Aspergillus niger (strain ATCC MYA-4892 / CBS 513.88 / FGSC A1513).